A 156-amino-acid polypeptide reads, in one-letter code: SsrA-binding protein (156 aa).

This sequence belongs to the SmpB family.

Its subcellular location is the cytoplasm. Its function is as follows. Required for rescue of stalled ribosomes mediated by trans-translation. Binds to transfer-messenger RNA (tmRNA), required for stable association of tmRNA with ribosomes. tmRNA and SmpB together mimic tRNA shape, replacing the anticodon stem-loop with SmpB. tmRNA is encoded by the ssrA gene; the 2 termini fold to resemble tRNA(Ala) and it encodes a 'tag peptide', a short internal open reading frame. During trans-translation Ala-aminoacylated tmRNA acts like a tRNA, entering the A-site of stalled ribosomes, displacing the stalled mRNA. The ribosome then switches to translate the ORF on the tmRNA; the nascent peptide is terminated with the 'tag peptide' encoded by the tmRNA and targeted for degradation. The ribosome is freed to recommence translation, which seems to be the essential function of trans-translation. The polypeptide is SsrA-binding protein (Clostridium tetani (strain Massachusetts / E88)).